The chain runs to 122 residues: Pollen allergen Phl p 2 (122 aa).

The N-terminal stretch at 1 to 26 (MSMASSSSSSLLAMAVLAALFAGAWC) is a signal peptide. Residues 41 to 120 (KHLAVLVKYE…KYTIGATYAP (80 aa)) form the Expansin-like CBD domain.

It belongs to the expansin family. Expansin B subfamily. Pollen specific.

Its subcellular location is the secreted. The sequence is that of Pollen allergen Phl p 2 (PHLPII) from Phleum pratense (Common timothy).